A 315-amino-acid chain; its full sequence is Ribose-phosphate pyrophosphokinase (315 aa).

ATP-binding positions include 37–39 and 96–97; these read DGE and RQ. Mg(2+) is bound by residues histidine 131 and aspartate 171. The active site involves lysine 195. D-ribose 5-phosphate-binding positions include arginine 197, aspartate 221, and 225–229; that span reads DTGGT.

Belongs to the ribose-phosphate pyrophosphokinase family. Class I subfamily. As to quaternary structure, homohexamer. The cofactor is Mg(2+).

The protein localises to the cytoplasm. It carries out the reaction D-ribose 5-phosphate + ATP = 5-phospho-alpha-D-ribose 1-diphosphate + AMP + H(+). It functions in the pathway metabolic intermediate biosynthesis; 5-phospho-alpha-D-ribose 1-diphosphate biosynthesis; 5-phospho-alpha-D-ribose 1-diphosphate from D-ribose 5-phosphate (route I): step 1/1. Involved in the biosynthesis of the central metabolite phospho-alpha-D-ribosyl-1-pyrophosphate (PRPP) via the transfer of pyrophosphoryl group from ATP to 1-hydroxyl of ribose-5-phosphate (Rib-5-P). The chain is Ribose-phosphate pyrophosphokinase from Haemophilus influenzae (strain ATCC 51907 / DSM 11121 / KW20 / Rd).